Reading from the N-terminus, the 163-residue chain is Small ribosomal subunit protein uS5 (163 aa).

The 64-residue stretch at 11–74 (LTDRVVHINR…EQAKKNLIRV (64 aa)) folds into the S5 DRBM domain.

This sequence belongs to the universal ribosomal protein uS5 family. In terms of assembly, part of the 30S ribosomal subunit. Contacts proteins S4 and S8.

Its function is as follows. With S4 and S12 plays an important role in translational accuracy. In terms of biological role, located at the back of the 30S subunit body where it stabilizes the conformation of the head with respect to the body. This is Small ribosomal subunit protein uS5 from Syntrophotalea carbinolica (strain DSM 2380 / NBRC 103641 / GraBd1) (Pelobacter carbinolicus).